The chain runs to 64 residues: Putative antitoxin VapB1 (64 aa).

Its function is as follows. Possibly the antitoxin component of a type II toxin-antitoxin (TA) system. Its cognate toxin is VapC1 (Potential). This chain is Putative antitoxin VapB1 (vapB1), found in Methanocaldococcus jannaschii (strain ATCC 43067 / DSM 2661 / JAL-1 / JCM 10045 / NBRC 100440) (Methanococcus jannaschii).